Here is a 250-residue protein sequence, read N- to C-terminus: MKVDLNADAGESYGAFAYGHDREIFPLVSSANLACGFHGGSPGRILEAVRLAKAHGVAVGAHPGFPDLVGFGRREMALSPEEVYADVLYQIGALSAFLKAEGLPLHHVKPHGALYLKACRDRETARAIALAVKAFDPGLPLVVLPGTVYEEEARKAGLRVVLEAFPERAYLRSGQLAPRSMPGSWITDPEEAARRALRMVLEGKVEALDGGEVAVRADTLCIHGDNPNAPEVARAVREALEQAGVEVRAF.

This sequence belongs to the LamB/PxpA family. As to quaternary structure, forms a complex composed of PxpA, PxpB and PxpC.

The catalysed reaction is 5-oxo-L-proline + ATP + 2 H2O = L-glutamate + ADP + phosphate + H(+). Functionally, catalyzes the cleavage of 5-oxoproline to form L-glutamate coupled to the hydrolysis of ATP to ADP and inorganic phosphate. The polypeptide is 5-oxoprolinase subunit A (Thermus thermophilus (strain ATCC 27634 / DSM 579 / HB8)).